An 823-amino-acid chain; its full sequence is ATP-dependent RNA helicase HrpA (823 aa).

The region spanning 16–179 (IKVLKNHNVL…FNNAPVVSIE (164 aa)) is the Helicase ATP-binding domain. Position 29–36 (29–36 (SPTGSGKT)) interacts with ATP. The DEAH box signature appears at 126–129 (DEAH). Residues 203–374 (KIKEIVLNVI…EVVLRMADIG (172 aa)) enclose the Helicase C-terminal domain.

This sequence belongs to the DEAD box helicase family. DEAH subfamily.

It catalyses the reaction ATP + H2O = ADP + phosphate + H(+). In terms of biological role, has RNA-stimulated ATPase activity and RNA helicase activity. Involved in global regulation of gene expression. Could be involved in RNA processing and post-transcriptional gene regulation. Essential for both tick transmission and mouse infection. This is ATP-dependent RNA helicase HrpA from Borreliella burgdorferi (strain ATCC 35210 / DSM 4680 / CIP 102532 / B31) (Borrelia burgdorferi).